Consider the following 264-residue polypeptide: Acetylglutamate kinase (264 aa).

Residues 40 to 41 (GG), arginine 62, and asparagine 158 each bind substrate.

The protein belongs to the acetylglutamate kinase family. ArgB subfamily.

The protein localises to the cytoplasm. It carries out the reaction N-acetyl-L-glutamate + ATP = N-acetyl-L-glutamyl 5-phosphate + ADP. Its pathway is amino-acid biosynthesis; L-arginine biosynthesis; N(2)-acetyl-L-ornithine from L-glutamate: step 2/4. Functionally, catalyzes the ATP-dependent phosphorylation of N-acetyl-L-glutamate. The chain is Acetylglutamate kinase from Cytophaga hutchinsonii (strain ATCC 33406 / DSM 1761 / CIP 103989 / NBRC 15051 / NCIMB 9469 / D465).